The chain runs to 300 residues: Hydroxyacyl-thioester dehydratase type 2, mitochondrial (300 aa).

This sequence belongs to the HTD2 family.

It localises to the mitochondrion. Functionally, mitochondrial 3-hydroxyacyl-thioester dehydratase involved in fatty acid biosynthesis. Required for respiratory growth and for normal mitochondrial morphology. This chain is Hydroxyacyl-thioester dehydratase type 2, mitochondrial (htd2), found in Schizosaccharomyces pombe (strain 972 / ATCC 24843) (Fission yeast).